The primary structure comprises 131 residues: Fumarate reductase subunit C (131 aa).

3 helical membrane-spanning segments follow: residues 30-50 (EGTCLPQLWFSLVVLFGVFAL), 58-78 (AGFVGFLSNPILMLINIVTLI), and 109-129 (IVRGLWGLTIVVTVVILAVAL).

Belongs to the FrdC family. In terms of assembly, part of an enzyme complex containing four subunits: a flavoprotein (FrdA), an iron-sulfur protein (FrdB), and two hydrophobic anchor proteins (FrdC and FrdD).

The protein resides in the cell inner membrane. Functionally, two distinct, membrane-bound, FAD-containing enzymes are responsible for the catalysis of fumarate and succinate interconversion; fumarate reductase is used in anaerobic growth, and succinate dehydrogenase is used in aerobic growth. Anchors the catalytic components of the fumarate reductase complex to the cell inner membrane, binds quinones. The polypeptide is Fumarate reductase subunit C (Proteus vulgaris).